The following is a 610-amino-acid chain: Ectonucleoside triphosphate diphosphohydrolase 7 (610 aa).

At 1–28 (MARISFSCLFPASWHCSLPSVTQFSRQR) the chain is on the cytoplasmic side. A helical membrane pass occupies residues 29–49 (VALLIISVAVFILVFAAVADL). Topologically, residues 50-555 (QLWSSRAFRD…VSWFRISFVY (506 aa)) are vesicular. E217 functions as the Proton acceptor in the catalytic mechanism. N336 and N400 each carry an N-linked (GlcNAc...) asparagine glycan. C454 and C483 are disulfide-bonded. A helical membrane pass occupies residues 556–576 (NHYLFFACILVVLLSIVLYIL). Residues 577–610 (RLRRIHRRQARASALDLLLMEEGVHTVLEPGIPT) are Cytoplasmic-facing.

Belongs to the GDA1/CD39 NTPase family. It depends on Ca(2+) as a cofactor. Requires Mg(2+) as cofactor.

It is found in the cytoplasmic vesicle membrane. The catalysed reaction is a ribonucleoside 5'-triphosphate + H2O = a ribonucleoside 5'-diphosphate + phosphate + H(+). It carries out the reaction UTP + H2O = UDP + phosphate + H(+). It catalyses the reaction GTP + H2O = GDP + phosphate + H(+). The enzyme catalyses CTP + H2O = CDP + phosphate + H(+). In terms of biological role, catalyzes the hydrolysis of nucleoside triphosphates and diphosphates in a calcium- or magnesium-dependent manner. Preferentially hydrolyzes nucleoside 5'-triphosphates, with substrate preference for UTP &gt; GTP &gt; CTP. Hydrolyzes ATP and nucleoside diphosphates only to a minor extent. The polypeptide is Ectonucleoside triphosphate diphosphohydrolase 7 (entpd7) (Xenopus tropicalis (Western clawed frog)).